Here is a 108-residue protein sequence, read N- to C-terminus: Thiosulfate sulfurtransferase GlpE (108 aa).

The region spanning 17–105 (HQGAAVLVDI…WHRRFPADVA (89 aa)) is the Rhodanese domain. Cys65 (cysteine persulfide intermediate) is an active-site residue.

This sequence belongs to the GlpE family.

It is found in the cytoplasm. It catalyses the reaction thiosulfate + hydrogen cyanide = thiocyanate + sulfite + 2 H(+). It carries out the reaction thiosulfate + [thioredoxin]-dithiol = [thioredoxin]-disulfide + hydrogen sulfide + sulfite + 2 H(+). Its function is as follows. Transferase that catalyzes the transfer of sulfur from thiosulfate to thiophilic acceptors such as cyanide or dithiols. May function in a CysM-independent thiosulfate assimilation pathway by catalyzing the conversion of thiosulfate to sulfite, which can then be used for L-cysteine biosynthesis. This Salmonella choleraesuis (strain SC-B67) protein is Thiosulfate sulfurtransferase GlpE.